Reading from the N-terminus, the 40-residue chain is Amyloid-beta precursor protein (40 aa).

It belongs to the APP family. As to quaternary structure, binds, via its C-terminus, to the PID domain of several cytoplasmic proteins, including APBB family members, the APBA family, MAPK8IP1, SHC1 and NUMB and DAB1. Binding to DAB1 inhibits its serine phosphorylation. Interacts (via NPXY motif) with DAB2 (via PID domain); the interaction is impaired by tyrosine phosphorylation of the NPXY motif. Also interacts with GPCR-like protein BPP, APPBP1, IB1, KNS2 (via its TPR domains), APPBP2 (via BaSS) and DDB1. In vitro, it binds MAPT via the MT-binding domains. Associates with microtubules in the presence of ATP and in a kinesin-dependent manner. Interacts, through a C-terminal domain, with GNAO1. Interacts with CPEB1, ANKS1B and AGER. Interacts with ITM2B. Interacts with ITM2C. Interacts with IDE. Can form homodimers; dimerization is enhanced in the presence of Cu(2+) ions. Can form homodimers; this is promoted by heparin binding. Interacts with SORL1 (via N-terminal ectodomain); this interaction retains APP in the trans-Golgi network and reduces processing into soluble APP-alpha and amyloid-beta peptides. Interacts with PLD3. Interacts with VDAC1. Interacts with NSG1; could regulate APP processing. Interacts with LRRK2. Interacts (via cytoplasmic domain) with KIF5B. Interacts (via C-terminus) with APBB2/FE65L1 (via C-terminus). Interacts (via intracellular domain) with APBB3. Proteolytically processed under normal cellular conditions. Cleavage either by alpha-secretase, beta-secretase or theta-secretase leads to generation and extracellular release of soluble APP peptides, S-APP-alpha and S-APP-beta, and the retention of corresponding membrane-anchored C-terminal fragments, C80, C83 and C99. Subsequent processing of C80 and C83 by gamma-secretase yields P3 peptides. This is the major secretory pathway and is non-amyloidogenic. Alternatively, presenilin/nicastrin-mediated gamma-secretase processing of C99 releases the amyloid-beta proteins, amyloid-beta protein 40 and amyloid-beta protein 42, major components of amyloid plaques, and the cytotoxic C-terminal fragments, gamma-CTF(50), gamma-CTF(57) and gamma-CTF(59). PSEN1 cleavage is more efficient with C83 than with C99 as substrate (in vitro). Amyloid-beta protein 40 and Amyloid-beta protein 42 are cleaved by ACE. Many other minor amyloid-beta peptides, amyloid-beta 1-X peptides, are found in cerebral spinal fluid (CSF) including the amyloid-beta X-15 peptides, produced from the cleavage by alpha-secretase.

It localises to the cell membrane. The protein localises to the membrane. It is found in the perikaryon. The protein resides in the cell projection. Its subcellular location is the growth cone. It localises to the clathrin-coated pit. The protein localises to the early endosome. It is found in the cytoplasmic vesicle. In terms of biological role, functions as a cell surface receptor and performs physiological functions on the surface of neurons relevant to neurite growth, neuronal adhesion and axonogenesis. Interaction between APP molecules on neighboring cells promotes synaptogenesis. Involved in cell mobility and transcription regulation through protein-protein interactions. Can promote transcription activation through binding to APBB1-KAT5 and inhibit Notch signaling through interaction with Numb. Couples to apoptosis-inducing pathways such as those mediated by G(o) and JIP. Inhibits G(o)-alpha ATPase activity. Acts as a kinesin I membrane receptor, mediating the axonal transport of beta-secretase and presenilin 1. May be involved in copper homeostasis/oxidative stress through copper ion reduction. In vitro, copper-metallated APP induces neuronal death directly or is potentiated through Cu(2+)-mediated low-density lipoprotein oxidation. Can regulate neurite outgrowth through binding to components of the extracellular matrix such as heparin and collagen I and IV. Induces a AGER-dependent pathway that involves activation of p38 MAPK, resulting in internalization of amyloid-beta peptide and mitochondrial dysfunction in cultured cortical neurons. Provides Cu(2+) ions for GPC1 which are required for release of nitric oxide (NO) and subsequent degradation of the heparan sulfate chains on GPC1. This chain is Amyloid-beta precursor protein, found in Felis catus (Cat).